A 234-amino-acid chain; its full sequence is Nitroreductase NfnB (234 aa).

Arg-25 to Arg-29 lines the FMN pocket. Ser-55, Arg-105, Tyr-113, and Ile-118 together coordinate NADP(+). FMN-binding positions include Tyr-137, Ala-181–Leu-182, and Arg-223.

This sequence belongs to the nitroreductase family. Homodimer. The cofactor is FMN.

Confers resistance to antitubercular drugs benzothiazinone (BTZ) and dinitrobenzamide (DNB). Inactivates BTZ and DNB by reducing an essential nitro group of these compounds to amino group or to hydroxyl amine, respectively, using NADH or NADPH as source of reducing equivalents; two electrons are transferred. Able to reduce the nitro group of bicyclic nitroimidazole PA-824, but not of quinone menadione, nitrofurazone, methyl-4-nitrobenzoate, 4-nitrobenzene methyl sulfonate or 4-nitroacetophenone. The protein is Nitroreductase NfnB of Mycolicibacterium smegmatis (strain ATCC 700084 / mc(2)155) (Mycobacterium smegmatis).